A 211-amino-acid chain; its full sequence is Riboflavin kinase (211 aa).

The tract at residues 1 to 85 (MKKILMLIEL…CDKISNALSK (85 aa)) is H-T-H motif-like. The segment at 86–211 (GVIVGEVVSG…GDRVRLEVIQ (126 aa)) is riboflavin kinase. 95–100 (GLGEGA) lines the CDP pocket. Positions 122 and 124 each coordinate Mg(2+). Residues Thr178 and Glu186 each coordinate FMN. 191 to 194 (VNLR) contributes to the CDP binding site.

The protein belongs to the archaeal riboflavin kinase family. Requires Mg(2+) as cofactor.

It catalyses the reaction riboflavin + CTP = CDP + FMN + H(+). It participates in cofactor biosynthesis; FMN biosynthesis; FMN from riboflavin (CTP route): step 1/1. Catalyzes the CTP-dependent phosphorylation of riboflavin (vitamin B2) to form flavin mononucleotide (FMN). The polypeptide is Riboflavin kinase (ribK) (Thermococcus kodakarensis (strain ATCC BAA-918 / JCM 12380 / KOD1) (Pyrococcus kodakaraensis (strain KOD1))).